Consider the following 700-residue polypeptide: Chaperonin CPN60, mitochondrial (700 aa).

A mitochondrion-targeting transit peptide spans 1-9; that stretch reads MRMKRIHIL. Residues 636–700 are disordered; it reads TYKHKLHDDE…SMNDEYNYDE (65 aa). The segment covering 644-700 has biased composition (acidic residues); it reads DEDTDEDDEEDEDDEDDEDDLDDDDYDDEDEEDEEDEEDEDDEDDEDSMNDEYNYDE.

This sequence belongs to the chaperonin (HSP60) family.

Its subcellular location is the mitochondrion matrix. Functionally, implicated in mitochondrial protein import and macromolecular assembly. May facilitate the correct folding of imported proteins. May also prevent misfolding and promote the refolding and proper assembly of unfolded polypeptides generated under stress conditions in the mitochondrial matrix. The protein is Chaperonin CPN60, mitochondrial of Plasmodium falciparum (isolate FCR-3 / Gambia).